The primary structure comprises 517 residues: Crotonobetaine/carnitine--CoA ligase (517 aa).

It belongs to the ATP-dependent AMP-binding enzyme family.

The catalysed reaction is 4-(trimethylamino)butanoate + ATP + CoA = 4-(trimethylamino)butanoyl-CoA + AMP + diphosphate. It catalyses the reaction crotonobetaine + ATP + CoA = crotonobetainyl-CoA + AMP + diphosphate. The enzyme catalyses (R)-carnitine + ATP + CoA = (R)-carnitinyl-CoA + AMP + diphosphate. Its pathway is amine and polyamine metabolism; carnitine metabolism. In terms of biological role, catalyzes the transfer of CoA to carnitine, generating the initial carnitinyl-CoA needed for the CaiB reaction cycle. Also has activity toward crotonobetaine and gamma-butyrobetaine. In Escherichia coli O127:H6 (strain E2348/69 / EPEC), this protein is Crotonobetaine/carnitine--CoA ligase.